A 329-amino-acid chain; its full sequence is DNA-directed RNA polymerase subunit alpha (329 aa).

The segment at 1–231 (MQTTLLKPKT…EQLAVFAQLE (231 aa)) is alpha N-terminal domain (alpha-NTD). The interval 249-329 (FDPILLRPVD…SWPPAGLDKR (81 aa)) is alpha C-terminal domain (alpha-CTD).

It belongs to the RNA polymerase alpha chain family. In terms of assembly, homodimer. The RNAP catalytic core consists of 2 alpha, 1 beta, 1 beta' and 1 omega subunit. When a sigma factor is associated with the core the holoenzyme is formed, which can initiate transcription.

The enzyme catalyses RNA(n) + a ribonucleoside 5'-triphosphate = RNA(n+1) + diphosphate. In terms of biological role, DNA-dependent RNA polymerase catalyzes the transcription of DNA into RNA using the four ribonucleoside triphosphates as substrates. The protein is DNA-directed RNA polymerase subunit alpha of Variovorax paradoxus (strain S110).